We begin with the raw amino-acid sequence, 356 residues long: Probable arabinogalactan endo-beta-1,4-galactanase A (356 aa).

Positions 1–21 (MLGKTVLLPLLVLLCHSLASA) are cleaved as a signal peptide. Asparagine 133 carries N-linked (GlcNAc...) asparagine glycosylation. Glutamate 157 (proton donor) is an active-site residue. The active-site Nucleophile is the glutamate 268.

It belongs to the glycosyl hydrolase 53 family.

It is found in the secreted. The catalysed reaction is The enzyme specifically hydrolyzes (1-&gt;4)-beta-D-galactosidic linkages in type I arabinogalactans.. Functionally, endogalactanase involved in the degradation of plant cell wall polysaccharides, and more particularly of hairy regions of pectin. The sequence is that of Probable arabinogalactan endo-beta-1,4-galactanase A (galA) from Aspergillus fumigatus (strain ATCC MYA-4609 / CBS 101355 / FGSC A1100 / Af293) (Neosartorya fumigata).